The following is a 204-amino-acid chain: Movement protein TGB2 (204 aa).

Residues 1–11 lie on the Cytoplasmic side of the membrane; sequence MKTTVGSRPNK. The helical transmembrane segment at 12 to 32 threads the bilayer; it reads YWPIVAGIGVVGLFAYLIFSN. At 33-72 the chain is on the lumenal side; it reads QKHSTESGDNIHKFANGGSYRDGSKSISYNRNHPFAYGNA. The chain crosses the membrane as a helical span at residues 73 to 93; it reads SSPGMLLPAMLTIIGIISYLW. The Cytoplasmic segment spans residues 94–204; sequence RTRDSVLGDS…RFNQCFEYSS (111 aa).

The protein belongs to the virgaviridae/benyvirus TGB2 movement protein family. In terms of assembly, interacts with movement protein TGB3. TGB1-TGB3-TGB2 complex formation is enhanced by ATP hydrolysis.

It is found in the host cell junction. The protein localises to the host plasmodesma. The protein resides in the host endoplasmic reticulum membrane. Its subcellular location is the host cytoplasm. It localises to the host cytoskeleton. Functionally, participates in the transport of viral genome to neighboring plant cells directly through plasmodesmata, without any budding. TGBp2 and TGBp3 are necessary for intracellular delivery of TGBp1-containing vRNPs to plasmodesmata. Can gate plasmodesmata and increase their size exclusion limit. To a lesser extent than TGB3, induces host actin cytoskeleton network thickening, which probably plays a major role in virus cell-to-cell movement. The polypeptide is Movement protein TGB2 (Barley stripe mosaic virus (BSMV)).